The primary structure comprises 253 residues: RAD51-associated protein 1 (253 aa).

An interaction with DNA region spans residues 32–51 (APLTKKSRTQPKEPKKENKK). Disordered stretches follow at residues 33-74 (PLTK…TSLD), 141-169 (DREH…EGND), and 184-244 (KKIK…WVPP). Positions 154-169 (PDEESEEDSDYREGND) are enriched in acidic residues. The span at 184-195 (KKIKRQTRKEKK) shows a compositional bias: basic residues. The interval 190–241 (TRKEKKTPKSENNTTVMELKSEQTQKMMSTSSEPVGRPLYTSSPVTNKKPKW) is interaction with DNA. The segment covering 199–222 (SENNTTVMELKSEQTQKMMSTSSE) has biased composition (polar residues).

Monomer.

The protein localises to the chromosome. The protein resides in the nucleus. Its function is as follows. Structure-specific DNA-binding protein involved in DNA repair by promoting RAD51-mediated homologous recombination. Acts by stimulating D-Loop formation by RAD51: specifically enhances joint molecule formation through its structure-specific DNA interaction and its interaction with RAD51. Binds single-stranded DNA (ssDNA), double-stranded DNA (dsDNA) and secondary DNA structures, such as D-loop structures: has a strong preference for branched-DNA structures that are obligatory intermediates during joint molecule formation. Involved in mitotic recombination-dependent replication fork processing. Also involved in meiosis by promoting DMC1-mediated homologous meiotic recombination. This chain is RAD51-associated protein 1, found in Gallus gallus (Chicken).